Consider the following 280-residue polypeptide: Cobalt import ATP-binding protein CbiO (280 aa).

The ABC transporter domain maps to 2–236; it reads IEVRDLRFHY…GDWLRQQGLG (235 aa). Residue 36–43 participates in ATP binding; that stretch reads GANGCGKT.

It belongs to the ABC transporter superfamily. Cobalt importer (TC 3.A.1.18.1) family. In terms of assembly, forms an energy-coupling factor (ECF) transporter complex composed of an ATP-binding protein (A component, CbiO), a transmembrane protein (T component, CbiQ) and 2 possible substrate-capture proteins (S components, CbiM and CbiN) of unknown stoichimetry.

It is found in the cell inner membrane. It functions in the pathway cofactor biosynthesis; adenosylcobalamin biosynthesis. Its function is as follows. Part of the energy-coupling factor (ECF) transporter complex CbiMNOQ involved in cobalt import. Presumably responsible for energy coupling to the transport system. In Syntrophus aciditrophicus (strain SB), this protein is Cobalt import ATP-binding protein CbiO.